The chain runs to 125 residues: Small ribosomal subunit protein eS8 (125 aa).

The segment at 1 to 35 (MQWQGRSVRKPSGGRYHTSQGKKRTEIGRAPAETH) is disordered.

It belongs to the eukaryotic ribosomal protein eS8 family. Part of the 30S ribosomal subunit.

This Methanoculleus marisnigri (strain ATCC 35101 / DSM 1498 / JR1) protein is Small ribosomal subunit protein eS8.